The following is a 510-amino-acid chain: Protein HGV2 (510 aa).

The interval G95 to D227 is disordered. A compositionally biased stretch (acidic residues) spans E98–E110. Basic and acidic residues-rich tracts occupy residues Q111–V129 and E142–V199. A compositionally biased stretch (low complexity) spans T204–S217. 2 TPR repeats span residues A260–L293 and A302–R335. The segment at D391–R510 is disordered. Positions A398 to T411 are enriched in low complexity. Short sequence motifs (nuclear localization signal) lie at residues V444–P451 and S465–E471. The span at E459–E471 shows a compositional bias: basic and acidic residues.

It belongs to the NASP family. As to expression, embryo and larvae.

It localises to the nucleus. Functionally, may function as a nucleosome assembly factor during rapid embryonic cell divisions. The sequence is that of Protein HGV2 (HGV2) from Halocynthia roretzi (Sea squirt).